We begin with the raw amino-acid sequence, 279 residues long: Thymidylate synthase (279 aa).

A dUMP-binding site is contributed by Arg29. His59 contributes to the (6R)-5,10-methylene-5,6,7,8-tetrahydrofolate binding site. 134–135 (RR) serves as a coordination point for dUMP. The active-site Nucleophile is Cys154. DUMP contacts are provided by residues 181–184 (RSAD), Asn192, and 222–224 (HIY). (6R)-5,10-methylene-5,6,7,8-tetrahydrofolate is bound at residue Asp184. Ala278 provides a ligand contact to (6R)-5,10-methylene-5,6,7,8-tetrahydrofolate.

It belongs to the thymidylate synthase family. Bacterial-type ThyA subfamily. As to quaternary structure, homodimer.

Its subcellular location is the cytoplasm. The enzyme catalyses dUMP + (6R)-5,10-methylene-5,6,7,8-tetrahydrofolate = 7,8-dihydrofolate + dTMP. It participates in pyrimidine metabolism; dTTP biosynthesis. Its function is as follows. Catalyzes the reductive methylation of 2'-deoxyuridine-5'-monophosphate (dUMP) to 2'-deoxythymidine-5'-monophosphate (dTMP) while utilizing 5,10-methylenetetrahydrofolate (mTHF) as the methyl donor and reductant in the reaction, yielding dihydrofolate (DHF) as a by-product. This enzymatic reaction provides an intracellular de novo source of dTMP, an essential precursor for DNA biosynthesis. The protein is Thymidylate synthase of Paracidovorax citrulli (strain AAC00-1) (Acidovorax citrulli).